The primary structure comprises 303 residues: Acetyltransferase ataH (303 aa).

A signal peptide spans 1 to 23 (MPTTAAFLRALYILTTLRGIGTS). A run of 3 helical transmembrane segments spans residues 42–62 (FLLH…MMTF), 194–214 (LVFA…GIML), and 257–277 (GYIW…FPLF).

Belongs to the wax synthase family.

The protein resides in the membrane. Its pathway is mycotoxin biosynthesis. Functionally, acetyltransferase; part of the gene cluster that mediates the biosynthesis of acetylaranotin, a member of the epipolythiodioxopiperazine (ETP) class of toxins characterized by a disulfide-bridged cyclic dipeptide. The first step of acetylaranotin biosynthesis is performed by the NRPS ataP which produces diketopiperazine cyclo-L-Phe-L-Phe via the condensation of 2 phenylalanines (L-Phe). The ataC domain of ataTC then catalyzes the formation of bishydroxylation of cyclo-L-Phe-L-Phe. The glutathione S-transferase domain ataG in ataIMG further catalyzes the conjugation of two glutathiones to the bishydroxylated intermediate. Next, the dipeptidase ataJ removes the Glu residues. The following step is performed by the carbon sulfur lyase domain ataI of ataIMG which may convert the bis-cysteinyl adduct to yield an epidithiol intermediate. The ataT domain from ataTC then catalyzes the oxidation of the free dithiols, followed by a cyclization step catalyzed by the cytochrome P450 ataF. AtaF probably acts as an epoxidase to promote a dual epoxidation formation at C8 and C9 along with C8' and C9', followed by the spontaneous nucleophilic attack of the amide nitrogens N10 and N10' to yield an intermediate with the pyrrolidine partial structure. The final steps of acetylaranotin biosynthesis involve the acetylation and ring rearrangement of an epitetrathiodiketopiperazine intermediate to produce acetylaranotin. AtaH probably catalyzes the acetylation of epitetrathiodiketopiperazine to produce a diacetate and ataY is responsible for the formation of the dihydrooxepin moiety that converts the diacetate intermediate to acetylaranotin via acetylapoaranotin. Both enzymes could function independently in the absence of the other. The acetylaranotin bis-thiomethyltransferase ataS located outside of acetylaranotin gene cluster is the main thiomethyltransferase responsible for converting acetylaranotin and its related intermediates to their methylated forms. The chain is Acetyltransferase ataH from Aspergillus terreus (strain NIH 2624 / FGSC A1156).